A 1044-amino-acid chain; its full sequence is Multiple epidermal growth factor-like domains protein 11 (1044 aa).

Positions 1–19 (MVLSLTGLIAFSFLQATLA) are cleaved as a signal peptide. The Extracellular segment spans residues 20-848 (LNPEDPNVCS…SPALGAERHS (829 aa)). The EMI domain occupies 24 to 101 (DPNVCSHWES…YYESGDFCIP (78 aa)). 14 disulfide bridges follow: C28–C89, C54–C63, C88–C99, C103–C118, C120–C129, C146–C154, C148–C161, C163–C172, C185–C197, C191–C204, C206–C215, C228–C240, C234–C247, and C249–C258. 9 EGF-like domains span residues 95 to 130 (SGDF…PDCS), 143 to 173 (SNRC…WRCE), 181 to 216 (HGKG…VYCE), 224 to 259 (HGAH…AVCA), 267 to 302 (FGQN…DRCQ), 310 to 345 (FGFQ…PRCQ), 399 to 434 (YGDG…EVCA), 442 to 477 (YGPN…LDCT), and 490 to 520 (NESC…DTCE). An N-linked (GlcNAc...) asparagine glycan is attached at N270. Disulfide bonds link C271–C283, C277–C290, C292–C301, C314–C326, C320–C333, C335–C344, C403–C415, C409–C422, C424–C433, C446–C458, C452–C465, C467–C476, C493–C501, C495–C508, and C510–C519. N531 carries N-linked (GlcNAc...) asparagine glycosylation. 5 consecutive EGF-like domains span residues 571–606 (WGPN…PLCQ), 659–694 (FGQD…KDCS), 707–737 (FHAC…LFCT), 750–780 (GRVC…QHCE), and 788–823 (FGYG…IRCD). 15 cysteine pairs are disulfide-bonded: C575–C587, C581–C594, C596–C605, C663–C675, C669–C682, C684–C693, C710–C718, C712–C725, C727–C736, C753–C761, C755–C768, C770–C779, C792–C804, C798–C811, and C813–C822. The helical transmembrane segment at 849–869 (VGAVTGIMLLLFLIVVLLGLF) threads the bilayer. Residues 870-1044 (AWHRRRQKEK…ANGPSQDKQS (175 aa)) are Cytoplasmic-facing. The segment at 1023–1044 (GHYDLLPVRQSPANGPSQDKQS) is disordered. The segment covering 1033–1044 (SPANGPSQDKQS) has biased composition (polar residues).

The protein belongs to the MEGF family. In terms of assembly, homomer. Does not interact with MEGF10.

It localises to the cell membrane. The protein resides in the basolateral cell membrane. In terms of biological role, may regulate the mosaic spacing of specific neuron subtypes in the retina through homotypic retinal neuron repulsion. Mosaics provide a mechanism to distribute each cell type evenly across the retina, ensuring that all parts of the visual field have access to a full set of processing elements. The chain is Multiple epidermal growth factor-like domains protein 11 (MEGF11) from Homo sapiens (Human).